Consider the following 390-residue polypeptide: Protein phosphatase methylesterase 1 (390 aa).

The tract at residues 19 to 50 (FGLSSLSEDPDESESNSNYFSPTPQPPNELRT) is disordered. The 233-residue stretch at 100–332 (PIFICHHGAG…NLIIGQMQGK (233 aa)) folds into the AB hydrolase-1 domain. Active-site residues include serine 186, aspartate 213, and histidine 346.

This sequence belongs to the AB hydrolase superfamily.

The enzyme catalyses [phosphatase 2A protein]-C-terminal L-leucine methyl ester + H2O = [phosphatase 2A protein]-C-terminal L-leucine + methanol + H(+). Demethylates proteins that have been reversibly carboxymethylated. Demethylates the phosphatase PP2A catalytic subunit. This chain is Protein phosphatase methylesterase 1 (PPE1), found in Debaryomyces hansenii (strain ATCC 36239 / CBS 767 / BCRC 21394 / JCM 1990 / NBRC 0083 / IGC 2968) (Yeast).